The sequence spans 138 residues: Acidic phospholipase A2 BE-I-PLA2 (138 aa).

Positions 1–16 are cleaved as a signal peptide; the sequence is MRTLWIMAVLLVGVEG. Intrachain disulfides connect Cys-42–Cys-131, Cys-44–Cys-60, Cys-59–Cys-111, Cys-65–Cys-138, Cys-66–Cys-104, Cys-73–Cys-97, and Cys-91–Cys-102. Positions 43, 45, and 47 each coordinate Ca(2+). The active site involves His-63. Asp-64 is a binding site for Ca(2+). Asp-105 is an active-site residue.

This sequence belongs to the phospholipase A2 family. Group II subfamily. D49 sub-subfamily. Requires Ca(2+) as cofactor. Expressed by the venom gland.

It is found in the secreted. The catalysed reaction is a 1,2-diacyl-sn-glycero-3-phosphocholine + H2O = a 1-acyl-sn-glycero-3-phosphocholine + a fatty acid + H(+). Snake venom phospholipase A2 that shows a potent inhibition of human platelet aggregation. This inhibition is concentration-dependent when aggregation is induced by collagen, and concentration-independent when aggregation is induced by arachidonic acid. In human umbilical-cord vein endothelial cells, this toxin stimulates endothelial cells to release prostaglandin I(2), suggesting an increase of its potential anti-platelet activity in vivo. PLA2 catalyzes the calcium-dependent hydrolysis of the 2-acyl groups in 3-sn-phosphoglycerides. This Bothrops erythromelas (Caatinga lance head) protein is Acidic phospholipase A2 BE-I-PLA2.